The sequence spans 65 residues: Large ribosomal subunit protein eL24 (65 aa).

Residues cysteine 6, cysteine 9, cysteine 32, and cysteine 36 each coordinate Zn(2+). Residues 6–36 (CAFCGADIPPGYGIMYVKSDGTVLRYCSRKC) form a C4-type zinc finger.

Belongs to the eukaryotic ribosomal protein eL24 family. As to quaternary structure, part of the 50S ribosomal subunit. Forms a cluster with proteins L3 and L14. Zn(2+) is required as a cofactor.

Binds to the 23S rRNA. This chain is Large ribosomal subunit protein eL24, found in Pyrobaculum arsenaticum (strain DSM 13514 / JCM 11321 / PZ6).